A 392-amino-acid polypeptide reads, in one-letter code: Alanine racemase 2 (392 aa).

The active-site Proton acceptor; specific for D-alanine is the Lys-40. An N6-(pyridoxal phosphate)lysine modification is found at Lys-40. Arg-138 serves as a coordination point for substrate. Tyr-266 serves as the catalytic Proton acceptor; specific for L-alanine. A substrate-binding site is contributed by Met-314.

It belongs to the alanine racemase family. The cofactor is pyridoxal 5'-phosphate.

The enzyme catalyses L-alanine = D-alanine. It functions in the pathway amino-acid biosynthesis; D-alanine biosynthesis; D-alanine from L-alanine: step 1/1. In terms of biological role, catalyzes the interconversion of L-alanine and D-alanine. May also act on other amino acids. This is Alanine racemase 2 (alr2) from Oceanobacillus iheyensis (strain DSM 14371 / CIP 107618 / JCM 11309 / KCTC 3954 / HTE831).